A 229-amino-acid polypeptide reads, in one-letter code: Non-structural protein P8 (229 aa).

The next 2 membrane-spanning stretches (helical) occupy residues 119–139 (IIHM…VCTL) and 162–182 (SLNP…MVCA).

The protein belongs to the orbivirus NS3 family. As to quaternary structure, forms homooligomers via coiled-coil motif. Interacts with host OPTN; this interaction inhibits innate immune response.

The protein resides in the host cell membrane. It localises to the host Golgi apparatus. Its function is as follows. Plays a role in the inhibition of host innate immune response. Interacts with host OPTN and thus inhibits the recruitment of TBK1 to the host Golgi apparatus. In turn, downstream partner IRF3 cannot be activated and IFN-beta production is impaired. Functionally, facilitates viral particle release either by increasing plasma membrane permeability through a viroporin-like activity or by viral budding. The protein is Non-structural protein P8 (Segment-10) of Bluetongue virus 1 (isolate Australia) (BTV 1).